Consider the following 556-residue polypeptide: Dihydroxy-acid dehydratase (556 aa).

[2Fe-2S] cluster is bound at residue C47. Position 79 (D79) interacts with Mg(2+). A [2Fe-2S] cluster-binding site is contributed by C120. Positions 121 and 122 each coordinate Mg(2+). N6-carboxylysine is present on K122. C192 contributes to the [2Fe-2S] cluster binding site. E444 contributes to the Mg(2+) binding site. The active-site Proton acceptor is the S470.

It belongs to the IlvD/Edd family. In terms of assembly, homodimer. [2Fe-2S] cluster is required as a cofactor. Mg(2+) serves as cofactor.

It catalyses the reaction (2R)-2,3-dihydroxy-3-methylbutanoate = 3-methyl-2-oxobutanoate + H2O. The catalysed reaction is (2R,3R)-2,3-dihydroxy-3-methylpentanoate = (S)-3-methyl-2-oxopentanoate + H2O. It participates in amino-acid biosynthesis; L-isoleucine biosynthesis; L-isoleucine from 2-oxobutanoate: step 3/4. It functions in the pathway amino-acid biosynthesis; L-valine biosynthesis; L-valine from pyruvate: step 3/4. Functions in the biosynthesis of branched-chain amino acids. Catalyzes the dehydration of (2R,3R)-2,3-dihydroxy-3-methylpentanoate (2,3-dihydroxy-3-methylvalerate) into 2-oxo-3-methylpentanoate (2-oxo-3-methylvalerate) and of (2R)-2,3-dihydroxy-3-methylbutanoate (2,3-dihydroxyisovalerate) into 2-oxo-3-methylbutanoate (2-oxoisovalerate), the penultimate precursor to L-isoleucine and L-valine, respectively. In Prochlorococcus marinus (strain MIT 9313), this protein is Dihydroxy-acid dehydratase.